The sequence spans 1216 residues: MLTKFETKSNRVKGLSFHPKRPWILASLHSGVIQLWDYRMGTLIDRFDEHEGPVRGVHFHNSQPLFVSGGDDYKIKVWNYKNHRCLFTLLGHLDYIRTVQFHHEYPWIVSASDDQTIRIWNWQSRTCVSVLTGHNHYVMCASFHPKEDLVVSASLDQTVRVWDIGALRKKTVSPADDIMRLTQMNSDLFGGVDAIVKYVLEGHDRGVNWAAFHPTLPLIVSGADDRQVKLWRMNETKAWEVDTLRGHMNNVSSVMFHAKQDIIVSNSEDKSIRVWDATKRTGLQTFRREHDRFWILAVHPEMNLLAAGHDSGMIVFKLERERPAFALSGDSLFYAKDRFLRYYEYSTQRDSQVIPIRRPGTPSLNQSPRTLSYSPTENAVLICSDLDGGSYELYIIPKDSVGRSDVVQDAKRGTGGSAVFIARNRFAVLEKSTSQVLVKNLKNEVVKKSPLPIPTDAIFYAGTGNLLCRSEDKVVIFDLQQRLVLGELQTPFVRYVVWSSDMESVALLSKHTIIIASKKLVLQCTLHETIRVKSGAWDDNGVFIYTTLNHIKYCLPNGDSGIIRTLDVPIYITKVSGNTIFCLDRDGKNKAITINATEYIFKLSLLRKRYDHVMSMIKNSQLCGQAMIAYLQQKGFPEVALHFVEDERIRFNLALESGNISVAVASATQINEKDHWYRLGVEALRQGNSGIVEFAYQQTKNFERLSFLYLITGNLDKLSKLMKIAEVKNNVMGQFHNALYLGDVKERVKILENAGHLPLAYITASVHGLNDIAERLATELGDNVPSLPEGKTPSLLMPPTPIMCGGDWPLLRVMKGIFEGGLESADRGGTVDEEDVEGDWGEELDINVDGMENRDIEDILAAAEAGEEENDEEGGWGLEDLVLPPELDTPKASANARSSVFVTPPQGMPVSQSWSQKSSLAAEQAAAGSFDTAMRLLHRQLGIKNFTPLKSMFLDLFNGSHSYLRAFSSCPVVPLAIERGWSESSSPNVRSPPALVYDFSQLDEKLKSGYKATTTGKFTEALRLFLSILHTIPLVVVETRREVDEVKELIVIVKEYVLGLQMELKRREMKDDPVRQQELAAYFTHCNLQTPHLRLALLSAMGVCYKAKNLATASNFARRLLETSPVDSQAKMARQVVQAAERNMTDETKLNYDFRNPFVVCGSTYVPIYRGQKDVSCPYCTARFVPNQEGNICTVCDLAVIGADASGLLCSPSQVR.

WD repeat units follow at residues 7–48 (TKSN…DRFD), 49–88 (EHEG…CLFT), 91–132 (GHLD…SVLT), 133–172 (GHNH…KKTV), 202–241 (GHDR…AWEV), 246–285 (GHMN…GLQT), 288–326 (REHD…PAFA), and 363–404 (SLNQ…VGRS).

Oligomeric complex that consists of at least the alpha, beta, beta', gamma, delta, epsilon and zeta subunits.

It is found in the cytoplasm. The protein localises to the golgi apparatus membrane. Its subcellular location is the cytoplasmic vesicle. The protein resides in the COPI-coated vesicle membrane. In terms of biological role, the coatomer is a cytosolic protein complex that binds to dilysine motifs and reversibly associates with Golgi non-clathrin-coated vesicles, which further mediate biosynthetic protein transport from the ER, via the Golgi up to the trans Golgi network. Coatomer complex is required for budding from Golgi membranes, and is essential for the retrograde Golgi-to-ER transport of dilysine-tagged proteins. The sequence is that of Coatomer subunit alpha-1 from Arabidopsis thaliana (Mouse-ear cress).